The sequence spans 326 residues: Homocysteine S-methyltransferase 1 (326 aa).

The 315-residue stretch at 9-323 (LLEDLIEKCG…STIKAISRDL (315 aa)) folds into the Hcy-binding domain. Zn(2+) is bound by residues Cys241, Cys308, and Cys309.

The cofactor is Zn(2+). In terms of tissue distribution, expressed in roots, young leaves, florets and flowers. Not detected in old leaves.

It carries out the reaction S-methyl-L-methionine + L-homocysteine = 2 L-methionine + H(+). Inhibited by L-methionine. In terms of biological role, catalyzes methyl transfer from S-methylmethionine to homocysteine. The highest preference is for DL-homocysteine &gt;&gt; DL-cysteine. Has no selenocysteine methyltransferase activity. The polypeptide is Homocysteine S-methyltransferase 1 (HMT1) (Brassica oleracea var. italica (Broccoli)).